We begin with the raw amino-acid sequence, 114 residues long: As-peptide 126 (114 aa).

A signal peptide spans 1-22; it reads MSRALICSLALLAMLVISGTYA. Tandem repeats lie at residues 22 to 29, 30 to 37, 38 to 45, 46 to 53, 54 to 61, 62 to 69, 70 to 77, 78 to 85, and 86 to 93. A 9 X 8 AA approximate tandem repeats of [AP]-[ILS]-[AP]-A-A-N-A-[DE] region spans residues 22–93; that stretch reads ASPAANAEAL…AEPLAAANAE (72 aa). Residues 23-104 constitute a propeptide that is removed on maturation; that stretch reads SPAANAEALA…SAGPSPLAAA (82 aa). The segment covering 82-96 has biased composition (low complexity); the sequence is ANAEPLAAANAEPSA. The disordered stretch occupies residues 82–114; sequence ANAEPLAAANAEPSAGPSPLAAAQDPPVVKMKG. Pyrrolidone carboxylic acid is present on Gln105. Lys113 is modified (lysine amide).

As to expression, expressed by the venom gland.

It localises to the secreted. The sequence is that of As-peptide 126 from Anoplius samariensis (Solitary wasp).